The chain runs to 85 residues: U4-theraphotoxin-Hhn1j (85 aa).

Positions 1 to 22 are cleaved as a signal peptide; sequence MKVTLIAILTCAAVLVLHTTAA. The propeptide occupies 23–48; it reads EELEAESQLMEVGMPDTELAAVDEER. 3 disulfide bridges follow: cysteine 52–cysteine 66, cysteine 56–cysteine 77, and cysteine 71–cysteine 82.

It belongs to the neurotoxin 12 (Hwtx-2) family. 02 (Hwtx-2) subfamily. Expressed by the venom gland.

It is found in the secreted. Its function is as follows. Postsynaptic neurotoxin. The chain is U4-theraphotoxin-Hhn1j from Cyriopagopus hainanus (Chinese bird spider).